The following is a 139-amino-acid chain: Putative nickel-responsive regulator (139 aa).

Positions 77, 88, 90, and 96 each coordinate Ni(2+).

Belongs to the transcriptional regulatory CopG/NikR family. The cofactor is Ni(2+).

Functionally, transcriptional regulator. The polypeptide is Putative nickel-responsive regulator (Haloarcula marismortui (strain ATCC 43049 / DSM 3752 / JCM 8966 / VKM B-1809) (Halobacterium marismortui)).